The following is a 449-amino-acid chain: MTRPSVKLLTTLLACLMEMLNFRVSSGKDPDLLSSSSSSMSPSDFLDKLMGRTSGYDARIRPNFKGPPVNVTCNIFINSFGSVTETTMDYRVNIFLRQKWNDPRLAYSEYPDSSLDLDPSMLDSIWKPDLFFANEKGANFHDVTTDNKLLRIFKDGTVLYSIRLTLILSCPMDLKNFPMDVQTCTMQLESFGYTMNDLIFEWLDKGPVQVADGLTLPQFLIRDEKDLGYCTKHYNTGKFTCIEVKFHLERQMGYYLIQMYIPSLLIVILSWVSFWINMDAAPARVALGITTVLTMTTQSSGSRASLPKVSYVKAIDIWMAVCLLFVFAALLEYAGVNFVSRQQKEFLRLKRRQRRTQKEEDLQDGRLHFSSYNTTTCVKDGAVVKNTQVNQIQQPSILKNTETNRKKFVDRAKRIDTISRAAFPLAFLIFNVFYWITYKIIRHESARKD.

Positions 1–27 are cleaved as a signal peptide; it reads MTRPSVKLLTTLLACLMEMLNFRVSSG. Topologically, residues 28-255 are extracellular; it reads KDPDLLSSSS…FHLERQMGYY (228 aa). An N-linked (GlcNAc...) asparagine glycan is attached at Asn70. 2 residues coordinate glycine: Arg97 and Ser161. Position 97 (Arg97) interacts with strychnine. Cysteines 170 and 184 form a disulfide. Zn(2+) is bound by residues Glu224 and Asp226. Residues Cys230 and Cys241 are joined by a disulfide bond. Thr236 is a glycine binding site. His247 is a binding site for Zn(2+). Residues 256–276 form a helical membrane-spanning segment; that stretch reads LIQMYIPSLLIVILSWVSFWI. Residues 277–282 lie on the Cytoplasmic side of the membrane; the sequence is NMDAAP. The chain crosses the membrane as a helical span at residues 283–302; the sequence is ARVALGITTVLTMTTQSSGS. The Extracellular segment spans residues 303–313; that stretch reads RASLPKVSYVK. The helical transmembrane segment at 314–334 threads the bilayer; it reads AIDIWMAVCLLFVFAALLEYA. Residues 335–420 lie on the Cytoplasmic side of the membrane; that stretch reads GVNFVSRQQK…RAKRIDTISR (86 aa). A helical transmembrane segment spans residues 421 to 441; that stretch reads AAFPLAFLIFNVFYWITYKII. The Extracellular portion of the chain corresponds to 442 to 449; it reads RHESARKD.

It belongs to the ligand-gated ion channel (TC 1.A.9) family.

The protein localises to the postsynaptic cell membrane. It is found in the synapse. The protein resides in the cell membrane. It localises to the cell projection. It catalyses the reaction chloride(in) = chloride(out). Channel opening is triggered by extracellular glycine. Channel opening is also triggered by taurine and beta-alanine. Inhibited by strychnine. Subunit of heteromeric glycine-gated chloride channels. Plays a role in synaptic plasticity. Contributes to the generation of inhibitory postsynaptic currents, and is involved in the down-regulation of neuronal excitability. The chain is Glycine receptor subunit alpha-2 (glra2) from Danio rerio (Zebrafish).